The following is a 675-amino-acid chain: Putative L-type lectin-domain containing receptor kinase I.11 (675 aa).

The signal sequence occupies residues 1 to 22 (MASERLHLILLVFFNHLTFLLS). Topologically, residues 23 to 292 (QQEEAGFIYN…PKAKQEQTSP (270 aa)) are extracellular. The legume-lectin like stretch occupies residues 27–263 (AGFIYNGFGQ…YQYILGWSFS (237 aa)). 5 N-linked (GlcNAc...) asparagine glycosylation sites follow: Asn60, Asn129, Asn186, Asn209, and Asn230. A helical transmembrane segment spans residues 293 to 313 (LLIVLLMLLVLIMLAVLGGIY). The Cytoplasmic portion of the chain corresponds to 314–675 (LYRRKKYAEV…THTITYGDGR (362 aa)). In terms of domain architecture, Protein kinase spans 348-620 (FDKDGRLGKG…QVIQYINQNL (273 aa)). ATP contacts are provided by residues 354–362 (LGKGGFGEV) and Lys376. Asp472 acts as the Proton acceptor in catalysis.

In the C-terminal section; belongs to the protein kinase superfamily. Ser/Thr protein kinase family. This sequence in the N-terminal section; belongs to the leguminous lectin family.

It is found in the cell membrane. It carries out the reaction L-seryl-[protein] + ATP = O-phospho-L-seryl-[protein] + ADP + H(+). The catalysed reaction is L-threonyl-[protein] + ATP = O-phospho-L-threonyl-[protein] + ADP + H(+). This chain is Putative L-type lectin-domain containing receptor kinase I.11 (LECRK111), found in Arabidopsis thaliana (Mouse-ear cress).